We begin with the raw amino-acid sequence, 264 residues long: MDIALKEKTDTEMVFVVSGVTVPFINAIRRICMMEVPKLAIEYVNMYRNDAKMFDEVLAHRLGLVPLAADPEFAESLKMPEECDCEEYCSECSVSLTLRKKGPGVVYSGDLVSETPAVKPVYPDIPLVKLGDDDELELEAVAQLGVGREHAKWEPTTACAYKYYPRIEFSEDCDECLECIEACPRDVLGEESGKPVVVDLENCSMCKSCVRACDKRAIDVGYEEGKFIFRIETDGSVDPKDVLLKACDILRDKAEQVITFCEGG.

Residues cysteine 203, cysteine 206, and cysteine 209 each contribute to the [3Fe-4S] cluster site.

The protein belongs to the archaeal Rpo3/eukaryotic RPB3 RNA polymerase subunit family. Part of the RNA polymerase complex. The cofactor is [3Fe-4S] cluster.

Its subcellular location is the cytoplasm. It catalyses the reaction RNA(n) + a ribonucleoside 5'-triphosphate = RNA(n+1) + diphosphate. Its function is as follows. DNA-dependent RNA polymerase (RNAP) catalyzes the transcription of DNA into RNA using the four ribonucleoside triphosphates as substrates. The polypeptide is DNA-directed RNA polymerase subunit Rpo3 (Methanothermobacter thermautotrophicus (strain ATCC 29096 / DSM 1053 / JCM 10044 / NBRC 100330 / Delta H) (Methanobacterium thermoautotrophicum)).